A 2758-amino-acid chain; its full sequence is Highly reducing polyketide synthase NEC1 (2758 aa).

Residues 153–492 (EASSPIIGLD…GSNAHVVMDD (340 aa)) form the Ketosynthase family 3 (KS3) domain. The interval 512-576 (PRLPGSSSSR…NTDTLQTTDT (65 aa)) is disordered. Positions 566–576 (TNTDTLQTTDT) are enriched in low complexity. The segment at 700–1044 (VFTGQGAQWP…GYATVLKRGD (345 aa)) is malonyl-CoA:ACP transacylase (MAT) domain. The active-site For malonyltransferase activity is the Ser790. Residues 1124–1255 (HELLGAPVPD…GFVRTEYSQT (132 aa)) are N-terminal hotdog fold. The interval 1124–1442 (HELLGAPVPD…VFKTIPNTAS (319 aa)) is dehydratase (DH) domain. In terms of domain architecture, PKS/mFAS DH spans 1124–1443 (HELLGAPVPD…FKTIPNTASS (320 aa)). Residue His1156 is the Proton acceptor; for dehydratase activity of the active site. The C-terminal hotdog fold stretch occupies residues 1283–1443 (TSMVHADKVY…FKTIPNTASS (161 aa)). Catalysis depends on Asp1351, which acts as the Proton donor; for dehydratase activity. Residues 1622 to 1727 (LEVGGGTGGA…RKLLKPGGKL (106 aa)) form a methyltransferase (CMet) domain region. The interval 2031–2344 (GTADVCFSED…LGKGEDAVVL (314 aa)) is enoyl reductase (ER) domain. Residues 2372–2553 (ASYMVVGGLG…PVAVSLDLPV (182 aa)) are ketoreductase (KR) domain. Residues 2673–2750 (EAQAVVLDAL…ALAAAVAGRS (78 aa)) form the Carrier domain. Ser2710 carries the post-translational modification O-(pantetheine 4'-phosphoryl)serine.

Functionally, highly reducing polyketide synthase; part of the gene cluster that mediates the biosynthesis of nectriapyrone and its analogs phomopyrone A, acropyrone and zaepyrone. The nectriapyrone biosynthetic gene cluster consists of two genes, the highly reducing polyketide synthase NEC1 that produces a demethylated analog of nectriapyrone from one unit of acetyl-CoA and one unit of malonyl-CoA; and the O-methyltransferase NEC2 that further methylates the NEC1 product to yield nectriapyrone. Nectriapyrone is further hydrolyzed to nectriapyrone D, also known as gulypyrone B, by an unidentified hydrolase localized outside the nectriapyrone cluster. The chain is Highly reducing polyketide synthase NEC1 from Pyricularia oryzae (strain 70-15 / ATCC MYA-4617 / FGSC 8958) (Rice blast fungus).